We begin with the raw amino-acid sequence, 129 residues long: Fluoride-specific ion channel FluC (129 aa).

4 helical membrane passes run 4–24 (LFVA…SGLI), 32–52 (FPWG…AFAT), 69–89 (FFMV…LQTL), and 105–125 (VLSV…AVLI). The Na(+) site is built by Gly-76 and Thr-79.

The protein belongs to the fluoride channel Fluc/FEX (TC 1.A.43) family.

The protein localises to the cell inner membrane. It catalyses the reaction fluoride(in) = fluoride(out). With respect to regulation, na(+) is not transported, but it plays an essential structural role and its presence is essential for fluoride channel function. Fluoride-specific ion channel. Important for reducing fluoride concentration in the cell, thus reducing its toxicity. The sequence is that of Fluoride-specific ion channel FluC from Rhodospirillum rubrum (strain ATCC 11170 / ATH 1.1.1 / DSM 467 / LMG 4362 / NCIMB 8255 / S1).